Reading from the N-terminus, the 306-residue chain is Pantothenate kinase (306 aa).

90 to 97 contacts ATP; sequence GSVAVGKS.

Belongs to the prokaryotic pantothenate kinase family.

Its subcellular location is the cytoplasm. The enzyme catalyses (R)-pantothenate + ATP = (R)-4'-phosphopantothenate + ADP + H(+). Its pathway is cofactor biosynthesis; coenzyme A biosynthesis; CoA from (R)-pantothenate: step 1/5. The sequence is that of Pantothenate kinase from Lactococcus lactis subsp. cremoris (strain SK11).